A 386-amino-acid chain; its full sequence is Patatin-06 (386 aa).

Positions 1–23 (MATTKSFLILFFMILATTSSTCA) are cleaved as a signal peptide. The PNPLA domain maps to 32-229 (LSIDGGGIKG…TVGDPALLSL (198 aa)). The GXGXXG motif lies at 36–41 (GGGIKG). Positions 75–79 (GTSTG) match the GXSXG motif. Ser77 functions as the Nucleophile in the catalytic mechanism. Asn115 is a glycosylation site (N-linked (GlcNAc...) asparagine). Catalysis depends on Asp215, which acts as the Proton acceptor. Residues 215 to 217 (DGG) carry the DGA/G motif. Residues 321 to 384 (ENALTGTTTE…NRKKLRANKA (64 aa)) are a coiled coil.

This sequence belongs to the patatin family. In terms of tissue distribution, tuber.

Its subcellular location is the vacuole. Functionally, probable lipolytic acyl hydrolase (LAH), an activity which is thought to be involved in the response of tubers to pathogens. The chain is Patatin-06 from Solanum tuberosum (Potato).